We begin with the raw amino-acid sequence, 247 residues long: Cell division protein ZapD (247 aa).

Belongs to the ZapD family. In terms of assembly, interacts with FtsZ.

The protein resides in the cytoplasm. Cell division factor that enhances FtsZ-ring assembly. Directly interacts with FtsZ and promotes bundling of FtsZ protofilaments, with a reduction in FtsZ GTPase activity. This Klebsiella pneumoniae subsp. pneumoniae (strain ATCC 700721 / MGH 78578) protein is Cell division protein ZapD.